A 307-amino-acid chain; its full sequence is UPF0749 protein MT1871 (307 aa).

The signal sequence occupies residues 1 to 23 (MAESDRLLGGYDPNAGYSAHAGA). The next 2 membrane-spanning stretches (helical) occupy residues 67-87 (VSWM…AAAV) and 152-172 (VLSL…VTVT).

It belongs to the UPF0749 family.

It localises to the cell membrane. The chain is UPF0749 protein MT1871 from Mycobacterium tuberculosis (strain CDC 1551 / Oshkosh).